Reading from the N-terminus, the 1273-residue chain is Receptor-type tyrosine-protein phosphatase C (1273 aa).

Residues 1-23 (MYLWLKLLAFSLALLGPEVFVTG) form the signal peptide. Residues 24-546 (QGTTDDGLDT…KPQSTSYNSK (523 aa)) lie on the Extracellular side of the membrane. Residues 45–192 (LPARTTEFTP…TEIATPQTKP (148 aa)) form a disordered region. 3 stretches are compositionally biased toward polar residues: residues 50-77 (TEFTPPSISERGNGSSETTYLPGFSSTL), 84-111 (QPDSQTPSARGADTQTLSSQADLTTLTA), and 141-192 (RNST…QTKP). N-linked (GlcNAc...) asparagine glycosylation is present at Asn62. 15 N-linked (GlcNAc...) asparagine glycosylation sites follow: Asn142, Asn153, Asn164, Asn178, Asn200, Asn245, Asn250, Asn271, Asn282, Asn327, Asn333, Asn371, Asn374, Asn471, and Asn502. Fibronectin type-III domains follow at residues 361 to 452 (PEML…TKAA) and 453 to 545 (RPGK…SYNS). The chain crosses the membrane as a helical span at residues 547–567 (ALIIFLVFLIIVTSIALLVVL). The Cytoplasmic segment spans residues 568-1273 (YKIYDLRKKR…PMSPALTPSS (706 aa)). Tyrosine-protein phosphatase domains lie at 622-881 (FLAE…LVEY) and 913-1196 (LEAE…MASI). A Phosphotyrosine modification is found at Tyr652. Residues Asp790, 822–828 (CSAGVGR), and Gln866 each bind substrate. Cys822 acts as the Phosphocysteine intermediate in catalysis. Phosphoserine is present on residues Ser944, Ser963, Ser966, Ser970, Ser973, Ser974, and Ser978. The segment at 960 to 984 (LEMSKESEAESDESSDEDSDSEETS) is disordered. A compositionally biased stretch (acidic residues) spans 968–981 (AESDESSDEDSDSE). The active-site Phosphocysteine intermediate is the Cys1137. Residues Ser1209 and Ser1266 each carry the phosphoserine modification. The interval 1219 to 1273 (VDGAKQDANCVQPADPLNKAQEDSKEVGASEPASGSEEPEHSANGPMSPALTPSS) is disordered.

It belongs to the protein-tyrosine phosphatase family. Receptor class 1/6 subfamily. Interacts with SKAP1. Interacts with DPP4; the interaction is enhanced in an interleukin-12-dependent manner in activated lymphocytes. Binds GANAB and PRKCSH. Interacts with CD53; this interaction stabilizes PTPRC on the membrane and is required for optimal phosphatase activity. Interacts with CLEC10A. In terms of processing, heavily N- and O-glycosylated. The cytoplasmic domain contains potential phosphorylation sites. Isoform 1 and isoform 2 are found in thymocyte and lymph node. Isoform 4 and isoform 3 are found in the lymph nod.

It localises to the cell membrane. The protein resides in the membrane raft. It is found in the synapse. The enzyme catalyses O-phospho-L-tyrosyl-[protein] + H2O = L-tyrosyl-[protein] + phosphate. Functionally, protein tyrosine-protein phosphatase required for T-cell activation through the antigen receptor. Acts as a positive regulator of T-cell coactivation upon binding to DPP4. The first PTPase domain has enzymatic activity, while the second one seems to affect the substrate specificity of the first one. Upon T-cell activation, recruits and dephosphorylates SKAP1 and FYN. Dephosphorylates LYN, and thereby modulates LYN activity. Interacts with CLEC10A at antigen presenting cell-T cell contact; CLEC10A on immature dendritic cells recognizes Tn antigen-carrying PTPRC/CD45 receptor on effector T cells and modulates T cell activation threshold to limit autoreactivity. The polypeptide is Receptor-type tyrosine-protein phosphatase C (Ptprc) (Rattus norvegicus (Rat)).